A 75-amino-acid chain; its full sequence is Chaplin-D (75 aa).

The N-terminal stretch at 1–23 (MKKSAAVVAGAIMALGMAAPAFA) is a signal peptide. The Chaplin domain maps to 34-74 (SPGVLSGNVIQVPVHVPVNVCGNSINVVGLLNPAFGNKCEN). An intrachain disulfide couples cysteine 54 to cysteine 72.

Belongs to the chaplin family. Short chaplin subfamily.

Its subcellular location is the cell surface. It localises to the secreted. It is found in the cell wall. The protein resides in the fimbrium. Its function is as follows. One of 8 partially redundant surface-active proteins required for efficient formation of aerial mycelium; the short chaplins assemble into a hydrophobic, amyloidal fibrillar surface layer that envelopes and protects aerial hyphae and spores, presumably anchored to the long chaplins. Chaplins have an overlapping function with the surface-active SapB peptide; chaplins are essential on minimal medium while on rich medium both chaplins and SapB are required for efficient aerial hyphae formation. Chaplins are also involved in cell attachment to a hydrophobic surface. Forms amyloid fibrils in vitro probably composed of stacked beta-sheets, at low extracellular concentrations individually restores the ability to form aerial hyphae to a chaplin-deficient strain. A small chaplin extract (ChpD, ChpE, ChpF, ChpG and ChpH) self-assembles into 2 different amyloids; small fibrils at the air-water interface form an amphipathic membrane that resembles spore-surface structures involved in aerial hyphae formation, and hydrophilic fibrils in solution that resemble the fibers that attach cells to a hydrophobic surface. At the air-water interface the hydrophilic surface is in contact with water (probably equivalent to the peptidoglycan layer), while the hydrophobic face is exposed to the air, making the surface of the aerial hyphae hydrophobic. A minimal chaplin strain capable of forming aerial mycelium/hyphae on minimal medium contains ChpC, ChpE and ChpH. The strain also has restored rodlet formation on the hyphae surface. A second minimal chaplin strain with ChpA, ChpD and ChpE makes slightly less robust hyphae. A small chaplin extract applied to a chaplin-deficient strain restores aerial hyphae formation. The small chaplin extract forms an amyloid-like structure similar to that seen on the surface of cells without rodlets (rdlA-rdlB deletions), and is highly surface active, reducing surface tension from 72 to 26 mJ/m(2), which probably allows escape of hyphae from an aqueous environment into air. The polypeptide is Chaplin-D (Streptomyces coelicolor (strain ATCC BAA-471 / A3(2) / M145)).